The primary structure comprises 175 residues: NADH dehydrogenase [ubiquinone] 1 alpha subcomplex assembly factor 4 (175 aa).

A lipid anchor (N-myristoyl glycine) is attached at glycine 2. Serine 35 bears the Phosphoserine mark.

It belongs to the NDUFAF4 family. As to quaternary structure, binds calmodulin. Interacts with NDUFAF3. In terms of assembly, (Microbial infection) Interacts with the vesicular stomatitis virus matrix protein/M; the interaction inhibits viral propagation. Post-translationally, phosphorylated on serine. Prolactin stimulate serine phosphorylation.

It is found in the mitochondrion. The protein resides in the membrane. Its function is as follows. Involved in the assembly of mitochondrial NADH:ubiquinone oxidoreductase complex (complex I). May be involved in cell proliferation and survival of hormone-dependent tumor cells. May be a regulator of breast tumor cell invasion. This chain is NADH dehydrogenase [ubiquinone] 1 alpha subcomplex assembly factor 4, found in Homo sapiens (Human).